Here is a 1832-residue protein sequence, read N- to C-terminus: Zinc finger SWIM domain-containing protein 8 (1832 aa).

Residues S36, S48, and S53 each carry the phosphoserine modification. The disordered stretch occupies residues 45-67 (RKQSAGPNSPTGGGGGGGSGGTR). Gly residues predominate over residues 55 to 65 (TGGGGGGGSGG). The SWIM-type zinc-finger motif lies at 172 to 208 (YNVAVMFDRCRVTSCSCTCGAGAKWCTHVVALCLFRI). Phosphoserine is present on residues S437 and S564. Disordered regions lie at residues 516–722 (PGAS…VGEE), 800–821 (NPPD…VSTS), and 1018–1216 (SQTH…TVDV). A compositionally biased stretch (basic and acidic residues) spans 563-572 (LSAEGGDKAL). The segment covering 1021-1042 (HKPQTLSSFYSSSRPATANQRS) has biased composition (polar residues). Positions 1121-1132 (SRGGYNGRGWGS) are enriched in gly residues. The residue at position 1141 (T1141) is a Phosphothreonine. The segment covering 1146-1161 (IDSSAPETTSDSSPTL) has biased composition (polar residues). S1155, S1158, and S1162 each carry phosphoserine. Positions 1176–1211 (GRGQDSDSISSSSSDSLGSSSSSGSRRASASGGARA) are enriched in low complexity. A Phosphoserine modification is found at S1270. Polar residues predominate over residues 1435–1446 (STAREGATSCSG). A disordered region spans residues 1435 to 1465 (STAREGATSCSGSGMRAAGEAGRGLPEGRGA). Residues 1455-1465 (AGRGLPEGRGA) show a composition bias toward gly residues. Phosphoserine is present on S1831.

This sequence belongs to the ZSWIM8 family. As to quaternary structure, component of the SCF-like E3 ubiquitin-protein ligase complex which contains CUL3, RBX1, ELOB, ELOC and ZSWIM8. Interacts with DAB1.

The protein localises to the cytoplasm. Its subcellular location is the cytosol. The protein operates within protein modification; protein ubiquitination. Its function is as follows. Substrate recognition component of a SCF-like E3 ubiquitin-protein ligase complex that promotes target-directed microRNA degradation (TDMD), a process that mediates degradation of microRNAs (miRNAs). The SCF-like E3 ubiquitin-protein ligase complex acts by catalyzing ubiquitination and subsequent degradation of AGO proteins (AGO1, AGO2, AGO3 and/or AGO4), thereby exposing miRNAs for degradation. Specifically recognizes and binds AGO proteins when they are engaged with a TDMD target. May also acts as a regulator of axon guidance: specifically recognizes misfolded ROBO3 and promotes its ubiquitination and subsequent degradation. Plays an essential role for proper embryonic development of heart and lung. Controls protein quality of DAB1, a key signal molecule for brain development, thus protecting its signaling strength. Mechanistically, recognizes intrinsically disordered regions of DAB1 and eliminates misfolded DAB1 that cannot be properly phosphorylated. In Mus musculus (Mouse), this protein is Zinc finger SWIM domain-containing protein 8.